The primary structure comprises 66 residues: Small vasohibin-binding protein (66 aa).

Over residues Met1–Lys23 the composition is skewed to basic and acidic residues. Residues Met1–Lys32 are disordered. A coiled-coil region spans residues Ala5 to Gln52.

The protein belongs to the SVBP family. Interacts with VASH1 and VASH2.

The protein localises to the cytoplasm. Its subcellular location is the secreted. It localises to the cytoskeleton. Enhances the tyrosine carboxypeptidase activity of VASH1 and VASH2, thereby promoting the removal of the C-terminal tyrosine residue of alpha-tubulin. Also required to enhance the solubility and secretion of VASH1 and VASH2. Plays a role in axon and excitatory synapse formation. In Bos taurus (Bovine), this protein is Small vasohibin-binding protein.